Consider the following 289-residue polypeptide: MKMEVLSVQNHIQGKFGVNKIKDWPSSGVASTAPHPLEEEEENAVDVNAALDADVVDGHPASVLHMRQHQALNTRSTVPMAPPVAGSGKQSAVAASFDVVNGSSAAYHHAYMTNVLASTAHHPGHGHGPGPSPMPASPLQSTAGARFGAADNMDDVSASAVRDLSQQLQFQLRDAKQRHLACTEVNLPADLTERIAAEIIRMSDREPCGERACTLFIEFESEPNNVRRIASFKVDPDTVSIFELYLTLKQDKSGWTSLLPQFIKNLTRSNTINISPDFTLTKNKLYSSE.

The tract at residues 119–142 (TAHHPGHGHGPGPSPMPASPLQST) is disordered.

Belongs to the DDIT4 family.

It is found in the cytoplasm. Functionally, inhibits cell growth by regulating the Tor pathway upstream of the Tsc1-Tsc2 complex and downstream of Akt1. Acts as a cell death activator during head development. In Drosophila pseudoobscura pseudoobscura (Fruit fly), this protein is Protein charybde (chrb).